The sequence spans 476 residues: Zinc finger CCCH domain-containing protein 6 (476 aa).

Residues M1–A10 show a composition bias toward low complexity. The disordered stretch occupies residues M1–P57. A compositionally biased stretch (gly residues) spans G34–D51. 3 consecutive C3H1-type zinc fingers follow at residues R59–D87, R108–Q136, and R153–F181. Positions S290–E301 are enriched in polar residues. A disordered region spans residues S290–G309. 2 consecutive C3H1-type zinc fingers follow at residues R307–E335 and R353–G381. A disordered region spans residues T456–R476.

Its subcellular location is the nucleus. This Oryza sativa subsp. japonica (Rice) protein is Zinc finger CCCH domain-containing protein 6.